Reading from the N-terminus, the 158-residue chain is Coenzyme F420 hydrogenase subunit delta (158 aa).

The protein belongs to the peptidase A31 family.

The protein is Coenzyme F420 hydrogenase subunit delta (frhD) of Methanothermobacter thermautotrophicus (strain ATCC 29096 / DSM 1053 / JCM 10044 / NBRC 100330 / Delta H) (Methanobacterium thermoautotrophicum).